Reading from the N-terminus, the 322-residue chain is MTTNTQEINFQQQELKGRDFLTLADYTKDEINYLIDLADYLKKQHKDGVIFEPLKGKTLGMIFEKSSTRTRVSFETGIYQLGGLGIFLSSKDIQIGRGETIADTAKVLSGYLDGIMIRTFAQEDVEELAKHASIPVINGLTDLYHPCQVLADLQTIKEVKGKLHGVKLVYIGDGNNMTHSLMLGAAKTGMHMVAVTPDGYTPNKEVLTKAKSIANQHGAIIEWTSDIATAVQEADVIYTDVWASMGQEEEQQQREKDFENYQVNESLLEKAKTDVIFMHCLPAHRGEEVTAGVIDGKQSVVFQQAENRLHAQKALMTALMAD.

Carbamoyl phosphate is bound by residues serine 67–threonine 70, glutamine 94, arginine 118, and histidine 145–glutamine 148. Residues asparagine 176, aspartate 240, and serine 244 to methionine 245 contribute to the L-ornithine site. Carbamoyl phosphate-binding positions include cysteine 280–leucine 281 and arginine 308.

The protein belongs to the aspartate/ornithine carbamoyltransferase superfamily. OTCase family.

The protein resides in the cytoplasm. It catalyses the reaction carbamoyl phosphate + L-ornithine = L-citrulline + phosphate + H(+). The protein operates within amino-acid biosynthesis; L-arginine biosynthesis; L-arginine from L-ornithine and carbamoyl phosphate: step 1/3. Its function is as follows. Reversibly catalyzes the transfer of the carbamoyl group from carbamoyl phosphate (CP) to the N(epsilon) atom of ornithine (ORN) to produce L-citrulline. The chain is Ornithine carbamoyltransferase from Oceanobacillus iheyensis (strain DSM 14371 / CIP 107618 / JCM 11309 / KCTC 3954 / HTE831).